The chain runs to 128 residues: Centrosomal protein 15 (128 aa).

Its subcellular location is the cell projection. The protein localises to the cilium. Its function is as follows. May play a role in ciliary assembly. The polypeptide is Centrosomal protein 15 (Homo sapiens (Human)).